Consider the following 614-residue polypeptide: MGDWMTVTDPGLSSESKTISQYTSETKMSPSSLYSQQVLCSSIPLSKNVHSFFSAFCTEDNIEQSISYLDQELTTFGFPSLYEESKGKETKRELNIVAVLNCMNELLVLQRKNLLAQENVETQNLKLGSDMDHLQSCYSKLKEQLETSRREMIGLQERDRQLQCKNRNLHQLLKNEKDEVQKLQNIIASRATQYNHDMKRKEREYNKLKERLHQLVMNKKDKKIAMDILNYVGRADGKRGSWRTGKTEARNEDEMYKILLNDYEYRQKQILMENAELKKVLQQMKKEMISLLSPQKKKPRERVDDSTGTVISDVEEDAGELSRESMWDLSCETVREQLTNSIRKQWRILKSHVEKLDNQVSKVHLEGFNDEDVISRQDHEQETEKLELEIQQCKEMIKTQQQLLQQQLATAYDDDTTSLLRDCYLLEEKERLKEEWSLFKEQKKNFERERRSFTEAAIRLGLERKAFEEERASWLKQQFLNMTTFDHQNSENVKLFSAFSGSSDWDNLIVHSRQPQKKPHSVSNGSPVCMSKLTKSLPASPSTSDFCQTRSCISEHSSINVLNITAEEIKPNQVGGECTNQKWSVASRPGSQEGCYSGCSLSYTNSHVEKDDLP.

Coiled coils occupy residues 131–227 and 266–293; these read MDHL…IAMD and RQKQ…SLLS. Serine 290, serine 293, and serine 312 each carry phosphoserine. The segment at 292 to 317 is disordered; sequence LSPQKKKPRERVDDSTGTVISDVEED. Residues 374-460 adopt a coiled-coil conformation; it reads ISRQDHEQET…RSFTEAAIRL (87 aa). Phosphoserine occurs at positions 536, 540, and 542.

This sequence belongs to the ADIP family. As to quaternary structure, interacts with afadin and alpha-actinin. Interacts with VAV2. Interacts with SSX2 and SSX3. Does not interact with SSX1 and SSX4. Interacts with PCM1. Interacts with WRAP73. In terms of tissue distribution, widely expressed, with the highest expression in brain, intermediate expression in kidney, testis, spinal cord, liver, heart, lung, skeletal muscle, ovary, fetal liver and fetal brain, and little to no expression in pancreas and spleen. All specific brain regions showed intermediate to high expression, with highest expression in amygdala. Also expressed in fetal tissues, mainly in liver and brain.

It localises to the cell junction. The protein localises to the adherens junction. It is found in the nucleus. Its subcellular location is the cytoplasm. The protein resides in the cytoskeleton. It localises to the microtubule organizing center. The protein localises to the centrosome. It is found in the centriolar satellite. Its subcellular location is the cilium basal body. Functionally, belongs to an adhesion system, which plays a role in the organization of homotypic, interneuronal and heterotypic cell-cell adherens junctions (AJs). May connect the nectin-afadin and E-cadherin-catenin system through alpha-actinin and may be involved in organization of the actin cytoskeleton at AJs through afadin and alpha-actinin. Involved in cell movement: localizes at the leading edge of moving cells in response to PDGF and is required for the formation of the leading edge and the promotion of cell movement, possibly via activation of Rac signaling. Acts as a centrosome maturation factor, probably by maintaining the integrity of the pericentriolar material and proper microtubule nucleation at mitotic spindle poles. The function seems to implicate at least in part WRAP73; the SSX2IP:WRAP73 complex is proposed to act as regulator of spindle anchoring at the mitotic centrosome. Involved in ciliogenesis. It is required for targeted recruitment of the BBSome, CEP290, RAB8, and SSTR3 to the cilia. This is Afadin- and alpha-actinin-binding protein (SSX2IP) from Homo sapiens (Human).